Reading from the N-terminus, the 340-residue chain is MQYKNQNLTHFVKAAGUAAKLSPGGLKTILNFMQKTPALLSDIGNNEDASVYQISRDLALVQTLDFITPIVDSAYHFGAIAAANALSDVFAMGAEVINALNIVGFDTCNHDVNILKELLEGANDKVQECNALVVGGHTIESTELFFGLSVTGKVHPSKFIANNTSKIGDCIILTKPLGTGILSTALKAQMLNQKHLDIMLKNMMELNYKASQIALKFHPSAMSDVTGFGLLGHLKEMLNKNISFEIFQNEILFLEGAKEYFNMGLIPAGAYKNLEFIKELIPDLNEEKLLLCDPQTSGGLLISISEKESLECLKKLEDENIQAKIIAKVVNKQENDIIIS.

Residue Sec17 is part of the active site. Sec17 is a non-standard amino acid (selenocysteine). ATP contacts are provided by residues Lys20 and 45 to 47 (NNE). Residue Asp48 participates in Mg(2+) binding. ATP-binding positions include Asp65, Asp88, and 136–138 (GHT). Position 88 (Asp88) interacts with Mg(2+). Asp224 provides a ligand contact to Mg(2+).

The protein belongs to the selenophosphate synthase 1 family. Class I subfamily. As to quaternary structure, homodimer. It depends on Mg(2+) as a cofactor.

The enzyme catalyses hydrogenselenide + ATP + H2O = selenophosphate + AMP + phosphate + 2 H(+). Functionally, synthesizes selenophosphate from selenide and ATP. The chain is Selenide, water dikinase from Campylobacter jejuni (strain RM1221).